We begin with the raw amino-acid sequence, 526 residues long: DNA polymerase epsilon subunit B (526 aa).

It belongs to the DNA polymerase epsilon subunit B family. Subunit of the DNA polymerase II. Interacts with POL2A (via C-terminus).

Its subcellular location is the nucleus. Functionally, as accessory component of DNA polymerase II participates in chromosomal DNA replication. Required for the timing and determination of cell fate during plant embryogenesis and root pole development, by promoting cell cycle and cell type patterning. Necessary for proper shoot (SAM) and root apical meristem (RAM) functions. Is essential to promote the first divisions of the zygote. The sequence is that of DNA polymerase epsilon subunit B from Arabidopsis thaliana (Mouse-ear cress).